We begin with the raw amino-acid sequence, 296 residues long: Protein-export membrane protein SecF (296 aa).

6 consecutive transmembrane segments (helical) span residues 23 to 43 (MIIY…ANYV), 144 to 164 (AIVY…RVPV), 169 to 189 (VVFS…IFGI), 194 to 214 (ATIA…ILLT), 236 to 256 (GFTM…FSTA), and 265 to 285 (VLIF…AGVL).

It belongs to the SecD/SecF family. SecF subfamily. Part of the protein translocation apparatus. Forms a complex with SecD.

The protein localises to the cell membrane. Its function is as follows. Involved in protein export. The chain is Protein-export membrane protein SecF from Pyrococcus furiosus (strain ATCC 43587 / DSM 3638 / JCM 8422 / Vc1).